A 24-amino-acid chain; its full sequence is Coenzyme PQQ synthesis protein A (24 aa).

Positions Glu16 to Tyr20 form a cross-link, pyrroloquinoline quinone (Glu-Tyr).

It belongs to the PqqA family.

It functions in the pathway cofactor biosynthesis; pyrroloquinoline quinone biosynthesis. Its function is as follows. Required for coenzyme pyrroloquinoline quinone (PQQ) biosynthesis. PQQ is probably formed by cross-linking a specific glutamate to a specific tyrosine residue and excising these residues from the peptide. The polypeptide is Coenzyme PQQ synthesis protein A (Cupriavidus taiwanensis (strain DSM 17343 / BCRC 17206 / CCUG 44338 / CIP 107171 / LMG 19424 / R1) (Ralstonia taiwanensis (strain LMG 19424))).